A 218-amino-acid chain; its full sequence is Small ribosomal subunit protein uS3c (218 aa).

The region spanning 43–118 (IKNYVQKNPR…RLNIAIARIS (76 aa)) is the KH type-2 domain.

It belongs to the universal ribosomal protein uS3 family. In terms of assembly, part of the 30S ribosomal subunit.

The protein resides in the plastid. It localises to the chloroplast. The protein is Small ribosomal subunit protein uS3c (rps3) of Acorus calamus (Sweet flag).